The following is a 138-amino-acid chain: ATP synthase epsilon chain (138 aa).

The protein belongs to the ATPase epsilon chain family. F-type ATPases have 2 components, CF(1) - the catalytic core - and CF(0) - the membrane proton channel. CF(1) has five subunits: alpha(3), beta(3), gamma(1), delta(1), epsilon(1). CF(0) has three main subunits: a, b and c.

The protein resides in the cell inner membrane. Its function is as follows. Produces ATP from ADP in the presence of a proton gradient across the membrane. This is ATP synthase epsilon chain from Ruthia magnifica subsp. Calyptogena magnifica.